The chain runs to 135 residues: Small ribosomal subunit protein uS11 (135 aa).

The segment covering 1–11 (MPPKARAGAAV) has biased composition (low complexity). Residues 1–22 (MPPKARAGAAVKKVRRKERKNV) are disordered.

Belongs to the universal ribosomal protein uS11 family. As to quaternary structure, part of the 30S ribosomal subunit. Interacts with proteins S7 and S18. Binds to IF-3.

Located on the platform of the 30S subunit, it bridges several disparate RNA helices of the 16S rRNA. Forms part of the Shine-Dalgarno cleft in the 70S ribosome. The protein is Small ribosomal subunit protein uS11 of Salinispora tropica (strain ATCC BAA-916 / DSM 44818 / JCM 13857 / NBRC 105044 / CNB-440).